Reading from the N-terminus, the 330-residue chain is Phosphate acyltransferase (330 aa).

This sequence belongs to the PlsX family. Homodimer. Probably interacts with PlsY.

It is found in the cytoplasm. The catalysed reaction is a fatty acyl-[ACP] + phosphate = an acyl phosphate + holo-[ACP]. Its pathway is lipid metabolism; phospholipid metabolism. Functionally, catalyzes the reversible formation of acyl-phosphate (acyl-PO(4)) from acyl-[acyl-carrier-protein] (acyl-ACP). This enzyme utilizes acyl-ACP as fatty acyl donor, but not acyl-CoA. The polypeptide is Phosphate acyltransferase (Bacillus cereus (strain ATCC 14579 / DSM 31 / CCUG 7414 / JCM 2152 / NBRC 15305 / NCIMB 9373 / NCTC 2599 / NRRL B-3711)).